The following is a 441-amino-acid chain: Glutamyl-tRNA reductase (441 aa).

Residues 64-67 (TCNR), Ser123, 128-130 (ETQ), and Gln134 each bind substrate. Cys65 (nucleophile) is an active-site residue. 203 to 208 (GAGEMI) serves as a coordination point for NADP(+).

The protein belongs to the glutamyl-tRNA reductase family. As to quaternary structure, homodimer.

It carries out the reaction (S)-4-amino-5-oxopentanoate + tRNA(Glu) + NADP(+) = L-glutamyl-tRNA(Glu) + NADPH + H(+). Its pathway is porphyrin-containing compound metabolism; protoporphyrin-IX biosynthesis; 5-aminolevulinate from L-glutamyl-tRNA(Glu): step 1/2. In terms of biological role, catalyzes the NADPH-dependent reduction of glutamyl-tRNA(Glu) to glutamate 1-semialdehyde (GSA). This chain is Glutamyl-tRNA reductase, found in Burkholderia pseudomallei (strain K96243).